Consider the following 293-residue polypeptide: Mycothiol S-conjugate amidase (293 aa).

Zn(2+)-binding residues include His-13, Asp-16, and His-144.

The protein belongs to the MshB deacetylase family. Mca subfamily. In terms of assembly, monomer. Requires Zn(2+) as cofactor.

The enzyme catalyses mycothiol S-conjugate + H2O = an N-acetyl-L-cysteine-S-conjugate + 1D-myo-inositol 2-amino-2-deoxy-alpha-D-glucopyranoside. Its function is as follows. A mycothiol (MSH, N-acetylcysteinyl-glucosaminyl-inositol) S-conjugate amidase, it recycles conjugated MSH to the N-acetyl cysteine conjugate (AcCys S-conjugate, a mercapturic acid) and the MSH precursor. Involved in MSH-dependent detoxification of a number of alkylating agents and antibiotics. This chain is Mycothiol S-conjugate amidase, found in Streptomyces coelicolor (strain ATCC BAA-471 / A3(2) / M145).